The primary structure comprises 179 residues: Probable F-box protein At3g25550 (179 aa).

The F-box domain occupies 19-55 (IPNDDVLEEIIVRLPVKTLTRFQTVSKHWRHTIKSRN).

This Arabidopsis thaliana (Mouse-ear cress) protein is Probable F-box protein At3g25550.